The primary structure comprises 124 residues: Ribonuclease pancreatic (124 aa).

Substrate is bound by residues Lys7 and Arg10. His12 (proton acceptor) is an active-site residue. Cystine bridges form between Cys26/Cys84, Cys40/Cys95, Cys58/Cys110, and Cys65/Cys72. N-linked (GlcNAc...) asparagine; partial glycosylation occurs at Asn34. Substrate-binding positions include 41-45 (KPVBT), Lys66, and Arg85. The active-site Proton donor is His119.

This sequence belongs to the pancreatic ribonuclease family. In terms of assembly, monomer. Interacts with and forms tight 1:1 complexes with RNH1. Dimerization of two such complexes may occur. Interaction with RNH1 inhibits this protein. In terms of tissue distribution, pancreas.

Its subcellular location is the secreted. It carries out the reaction an [RNA] containing cytidine + H2O = an [RNA]-3'-cytidine-3'-phosphate + a 5'-hydroxy-ribonucleotide-3'-[RNA].. The enzyme catalyses an [RNA] containing uridine + H2O = an [RNA]-3'-uridine-3'-phosphate + a 5'-hydroxy-ribonucleotide-3'-[RNA].. In terms of biological role, endonuclease that catalyzes the cleavage of RNA on the 3' side of pyrimidine nucleotides. Acts on single-stranded and double-stranded RNA. The chain is Ribonuclease pancreatic (RNASE1) from Damaliscus korrigum (Topi).